We begin with the raw amino-acid sequence, 276 residues long: NH(3)-dependent NAD(+) synthetase (276 aa).

46-53 (GISGGQDS) serves as a coordination point for ATP. D52 is a Mg(2+) binding site. R140 is a binding site for deamido-NAD(+). T160 is an ATP binding site. E165 contributes to the Mg(2+) binding site. 2 residues coordinate deamido-NAD(+): K173 and D180. 2 residues coordinate ATP: K189 and T211. 260-261 (HK) is a deamido-NAD(+) binding site.

It belongs to the NAD synthetase family. Homodimer.

It catalyses the reaction deamido-NAD(+) + NH4(+) + ATP = AMP + diphosphate + NAD(+) + H(+). It participates in cofactor biosynthesis; NAD(+) biosynthesis; NAD(+) from deamido-NAD(+) (ammonia route): step 1/1. Catalyzes the ATP-dependent amidation of deamido-NAD to form NAD. Uses ammonia as a nitrogen source. The chain is NH(3)-dependent NAD(+) synthetase from Citrobacter koseri (strain ATCC BAA-895 / CDC 4225-83 / SGSC4696).